The following is a 379-amino-acid chain: Galactose-1-phosphate uridylyltransferase (379 aa).

Residues 1–10 (MSHSGADPEQ) are compositionally biased toward basic and acidic residues. Positions 1-20 (MSHSGADPEQRQQASEADAM) are disordered. Cys-75 lines the Zn(2+) pocket. UDP-alpha-D-glucose is bound by residues Ala-81, 97-98 (ND), and Asn-173. Residue His-184 participates in Zn(2+) binding. Catalysis depends on His-186, which acts as the Tele-UMP-histidine intermediate. Gln-188 is a binding site for UDP-alpha-D-glucose. Glu-202, His-301, His-319, and His-321 together coordinate Zn(2+). UDP-alpha-D-glucose contacts are provided by residues 334 to 337 (KFMV) and 339 to 340 (YE).

This sequence belongs to the galactose-1-phosphate uridylyltransferase type 1 family. In terms of assembly, homodimer. Zn(2+) serves as cofactor.

The catalysed reaction is alpha-D-galactose 1-phosphate + UDP-alpha-D-glucose = alpha-D-glucose 1-phosphate + UDP-alpha-D-galactose. The protein operates within carbohydrate metabolism; galactose metabolism. Its function is as follows. Plays an important role in galactose metabolism. The polypeptide is Galactose-1-phosphate uridylyltransferase (Galt) (Mus musculus (Mouse)).